The chain runs to 212 residues: Uridine kinase (212 aa).

13–20 is an ATP binding site; sequence GGSGSGKT.

The protein belongs to the uridine kinase family.

The protein localises to the cytoplasm. It catalyses the reaction uridine + ATP = UMP + ADP + H(+). The catalysed reaction is cytidine + ATP = CMP + ADP + H(+). It functions in the pathway pyrimidine metabolism; CTP biosynthesis via salvage pathway; CTP from cytidine: step 1/3. Its pathway is pyrimidine metabolism; UMP biosynthesis via salvage pathway; UMP from uridine: step 1/1. The chain is Uridine kinase from Bacillus anthracis (strain A0248).